Consider the following 512-residue polypeptide: Lysine--tRNA ligase (512 aa).

Mg(2+) is bound by residues Glu408 and Glu415.

Belongs to the class-II aminoacyl-tRNA synthetase family. As to quaternary structure, homodimer. It depends on Mg(2+) as a cofactor.

Its subcellular location is the cytoplasm. The enzyme catalyses tRNA(Lys) + L-lysine + ATP = L-lysyl-tRNA(Lys) + AMP + diphosphate. This chain is Lysine--tRNA ligase, found in Prochlorococcus marinus (strain MIT 9301).